The sequence spans 350 residues: Proton-activated chloride channel (350 aa).

The segment at 1-51 (MEAIRKELSRSYQELNDETDPIARDPEGAQEEEQEEAASAVVPDRDSDRSN) is disordered. Residues 1–63 (MEAIRKELSR…VHFSRTCLKN (63 aa)) are Cytoplasmic-facing. Residues 64–84 (VFSVLLIFVYLLLMGVAVFLV) traverse the membrane as a helical segment. Residues 85–297 (YQTITDFRDK…KDPYIQEIQD (213 aa)) are Extracellular-facing. Residues 298–318 (IITANPWSMIALLCSVFLVLF) form a helical membrane-spanning segment. Residues 319-350 (KAADFAKLSVKWMIKVRRRHLKKRTRELNHIS) are Cytoplasmic-facing.

The protein belongs to the proton-activated chloride channel family.

It is found in the cell membrane. It catalyses the reaction chloride(in) = chloride(out). Functionally, chloride channel gated by pH that facilitates the entry of chloride ions into cells upon exposure to extracellular acidic pH. This is Proton-activated chloride channel from Xenopus laevis (African clawed frog).